Consider the following 370-residue polypeptide: Putative glutamate--cysteine ligase 2 (370 aa).

It belongs to the glutamate--cysteine ligase type 2 family. YbdK subfamily.

It catalyses the reaction L-cysteine + L-glutamate + ATP = gamma-L-glutamyl-L-cysteine + ADP + phosphate + H(+). In terms of biological role, ATP-dependent carboxylate-amine ligase which exhibits weak glutamate--cysteine ligase activity. This chain is Putative glutamate--cysteine ligase 2, found in Herminiimonas arsenicoxydans.